A 71-amino-acid chain; its full sequence is UPF0346 protein BcerKBAB4_2120 (71 aa).

Belongs to the UPF0346 family.

This chain is UPF0346 protein BcerKBAB4_2120, found in Bacillus mycoides (strain KBAB4) (Bacillus weihenstephanensis).